The sequence spans 540 residues: Putative cysteine ligase BshC (540 aa).

Positions 455–491 (GKENLKRLIRVVNSFEEKVKQRHRKNNQVAIQQLQKI) form a coiled coil.

The protein belongs to the BshC family.

Its function is as follows. Involved in bacillithiol (BSH) biosynthesis. May catalyze the last step of the pathway, the addition of cysteine to glucosamine malate (GlcN-Mal) to generate BSH. The protein is Putative cysteine ligase BshC of Desulforamulus reducens (strain ATCC BAA-1160 / DSM 100696 / MI-1) (Desulfotomaculum reducens).